The primary structure comprises 311 residues: Cell division protein ZipA (311 aa).

Residues Met-1–Arg-5 are Periplasmic-facing. A helical membrane pass occupies residues Phe-6–Thr-26. At Ser-27 to Ala-311 the chain is on the cytoplasmic side. Residues Lys-32 to Glu-54 show a composition bias toward basic and acidic residues. The segment at Lys-32–Glu-60 is disordered.

It belongs to the ZipA family. Interacts with FtsZ via their C-terminal domains.

It localises to the cell inner membrane. Its function is as follows. Essential cell division protein that stabilizes the FtsZ protofilaments by cross-linking them and that serves as a cytoplasmic membrane anchor for the Z ring. Also required for the recruitment to the septal ring of downstream cell division proteins. The polypeptide is Cell division protein ZipA (Vibrio vulnificus (strain CMCP6)).